A 1193-amino-acid polypeptide reads, in one-letter code: Nucleolar protein 6 (1193 aa).

2 disordered regions span residues 1-69 (MRFV…TKNV) and 1137-1193 (KREQ…KVLK). Basic and acidic residues-rich tracts occupy residues 31 to 46 (AGDHSDLDEPKPKIAK) and 1151 to 1161 (DANKAEEESKP). Ser-35 is subject to Phosphoserine. Residues 1162–1184 (KPKKHRQRKGTGKKALPKRKRLI) are compositionally biased toward basic residues.

This sequence belongs to the NRAP family. As to quaternary structure, part of the small subunit (SSU) processome, composed of more than 70 proteins and the RNA chaperone small nucleolar RNA (snoRNA) U3. Expressed in nurse cells at stages 9-10 of oogenesis and exported to the oocyte.

It is found in the nucleus. Its subcellular location is the nucleolus. The protein resides in the chromosome. Part of the small subunit (SSU) processome, first precursor of the small eukaryotic ribosomal subunit. During the assembly of the SSU processome in the nucleolus, many ribosome biogenesis factors, an RNA chaperone and ribosomal proteins associate with the nascent pre-rRNA and work in concert to generate RNA folding, modifications, rearrangements and cleavage as well as targeted degradation of pre-ribosomal RNA by the RNA exosome. In Drosophila melanogaster (Fruit fly), this protein is Nucleolar protein 6.